We begin with the raw amino-acid sequence, 425 residues long: Divalent metal cation transporter MntH (425 aa).

The next 11 helical transmembrane spans lie at 30 to 50 (LLPF…PGNF), 61 to 81 (GYML…IQSL), 107 to 127 (IGLW…EFIG), 134 to 154 (LLFG…SFAI), 167 to 187 (AGIA…TFFA), 209 to 231 (VLLA…HSAL), 255 to 275 (ILIA…VAAA), 294 to 314 (FGHL…LVAG), 344 to 364 (FITI…TTAL), 365 to 385 (VLSQ…LIMF), and 401 to 421 (ITVV…FLIV).

It belongs to the NRAMP family.

The protein localises to the cell membrane. Its function is as follows. H(+)-stimulated, divalent metal cation uptake system. Involved in manganese uptake. Can probably also transport cadmium, cobalt, copper and zinc, but not iron. May be the predominant transporter of manganese during logarithmic phase growth. The protein is Divalent metal cation transporter MntH of Bacillus subtilis (strain 168).